The sequence spans 548 residues: Frizzled-7 (548 aa).

The signal sequence occupies residues 1–19 (MFATVSLLFCLLLQPSPSA). Topologically, residues 20 to 230 (QQYHGEKGIS…EEEVRFARLW (211 aa)) are extracellular. In terms of domain architecture, FZ spans 31–150 (PDHGFCQPIS…HGAGEICVGQ (120 aa)). Disulfide bonds link cysteine 36–cysteine 97, cysteine 44–cysteine 90, cysteine 81–cysteine 118, cysteine 107–cysteine 147, and cysteine 111–cysteine 135. Asparagine 50 is a glycosylation site (N-linked (GlcNAc...) asparagine). The N-linked (GlcNAc...) asparagine glycan is linked to asparagine 151. A helical transmembrane segment spans residues 231-251 (VGIWAILCGISTLFTVLTYLV). Residues 252 to 262 (DMRRFSYPERP) lie on the Cytoplasmic side of the membrane. A helical membrane pass occupies residues 263–283 (IIFLSGCYFMVAVAYTAGFLL). The Extracellular portion of the chain corresponds to 284–310 (EERGVCVERFSEDSYRTVAQGTKKEGC). A helical transmembrane segment spans residues 311–331 (TILFMILYFFGMASSIWWVIL). Residues 332-353 (SLTWFLAAGMKWGHEAIEANSQ) are Cytoplasmic-facing. A helical membrane pass occupies residues 354 to 374 (YFHLAAWAVPAVKTITILAMG). Topologically, residues 375–397 (QVDGDILSGVCYVGINSVDSLRG) are extracellular. Residues 398–418 (FVLAPLFVYLFIGTSFLLAGF) form a helical membrane-spanning segment. Residues 419–444 (VSLFRIRTIMKHDGTKTEKLEKLMVR) lie on the Cytoplasmic side of the membrane. A helical membrane pass occupies residues 445–465 (IGVFSVMYTVPATIVLACYFY). Over 466-502 (EQAFRDTWEKTWLVQTCKGFAVPCPNYNFAPMSPDFT) the chain is Extracellular. A helical membrane pass occupies residues 503-523 (VFMIKYLMTMIVGITSSFWIW). Topologically, residues 524–548 (SGKTLQSWRRFYHRLSNGGKGETAV) are cytoplasmic. The Lys-Thr-X-X-X-Trp motif, mediates interaction with the PDZ domain of Dvl family members motif lies at 526-531 (KTLQSW). Residues 546 to 548 (TAV) carry the PDZ-binding motif.

It belongs to the G-protein coupled receptor Fz/Smo family. In terms of assembly, interacts with wnt11 and sdc4. The extracellular domain interacts with the extracellular domain of pcdh8/papc.

It localises to the cell membrane. Its subcellular location is the endosome membrane. Its function is as follows. Receptor for Wnt proteins. Acts in both canonical and non-canonical Wnt pathways. Although different papers report differing Wnt preferences, wnt5a, wnt8b and wnt11 have been proposed as synergists. In the canonical Wnt pathway, acts via beta-catenin to promote the expression of the dorsal genes siamois, twin and nodal3 and to establish the dorsal axis of the embryo and induce dorsal mesoderm formation. In a non-canonical Wnt/planar cell polarity (PCP) pathway, acts with sdc4 and dvl2/dsh to regulate convergent extension movements in gastrulation. Triggers phosphorylation of dvl2/dsh and its translocation to the plasma membrane. In a third branch of Wnt signaling, acts in a non-canonical pathway via trimeric G proteins, and independently of dvl2/dsh, to recruit protein kinase C (PKC) to the membrane and thus activate PKC. PKC signaling controls cell sorting and tissue separation during gastrulation. The sequence is that of Frizzled-7 from Xenopus tropicalis (Western clawed frog).